A 228-amino-acid chain; its full sequence is Early nodulin-like protein 18 (228 aa).

The signal sequence occupies residues 1–26; that stretch reads MSPSCSSCVNVLLIMCLMLLSLSADA. A Phytocyanin domain is found at 28 to 148; that stretch reads KNYTVGESTG…GQHFMINVTH (121 aa). N29, N71, N94, and N145 each carry an N-linked (GlcNAc...) asparagine glycan. Cysteines 86 and 136 form a disulfide. The segment at 148-211 is disordered; that stretch reads HGQGLPDSSS…VHSKKSSSST (64 aa). A compositionally biased stretch (low complexity) spans 153 to 170; sequence PDSSSPDDAAAPGPSESS. Over residues 188–204 the composition is skewed to basic and acidic residues; sequence DHPKDIESADDDKEVHS. S204 carries the GPI-anchor amidated serine lipid modification. The propeptide at 205 to 228 is removed in mature form; sequence KKSSSSTTKTSLFCFVFMGLFASF.

It belongs to the early nodulin-like (ENODL) family. As to expression, mostly expressed in seedlings, roots and flowers, and, to a lower extent, in leaves, stems and seeds.

Its subcellular location is the cell membrane. Functionally, may act as a carbohydrate transporter. In Arabidopsis thaliana (Mouse-ear cress), this protein is Early nodulin-like protein 18.